The chain runs to 495 residues: Aspartyl/glutamyl-tRNA(Asn/Gln) amidotransferase subunit B (495 aa).

Belongs to the GatB/GatE family. GatB subfamily. As to quaternary structure, heterotrimer of A, B and C subunits.

It carries out the reaction L-glutamyl-tRNA(Gln) + L-glutamine + ATP + H2O = L-glutaminyl-tRNA(Gln) + L-glutamate + ADP + phosphate + H(+). It catalyses the reaction L-aspartyl-tRNA(Asn) + L-glutamine + ATP + H2O = L-asparaginyl-tRNA(Asn) + L-glutamate + ADP + phosphate + 2 H(+). Functionally, allows the formation of correctly charged Asn-tRNA(Asn) or Gln-tRNA(Gln) through the transamidation of misacylated Asp-tRNA(Asn) or Glu-tRNA(Gln) in organisms which lack either or both of asparaginyl-tRNA or glutaminyl-tRNA synthetases. The reaction takes place in the presence of glutamine and ATP through an activated phospho-Asp-tRNA(Asn) or phospho-Glu-tRNA(Gln). In Prochlorococcus marinus (strain MIT 9313), this protein is Aspartyl/glutamyl-tRNA(Asn/Gln) amidotransferase subunit B.